Reading from the N-terminus, the 327-residue chain is rRNA 2'-O-methyltransferase fibrillarin (327 aa).

A disordered region spans residues 1–96 (MGTDYRNSGR…GFKGGAKTMV (96 aa)). R10, R19, R44, R49, R55, R65, R69, and R78 each carry asymmetric dimethylarginine. The segment covering 22-56 (GNDRRDSGRSFGDRRPERPDFKRGDGGRGFGDRRG) has biased composition (basic and acidic residues). Gly residues predominate over residues 73-90 (DGPGGRGGPGGPGGGFKG). Residues 181–182 (TT), 200–201 (EF), 225–226 (DA), and 245–248 (DVAQ) contribute to the S-adenosyl-L-methionine site.

Belongs to the methyltransferase superfamily. Fibrillarin family. Component of box C/D small nucleolar ribonucleoprotein (snoRNP) particles. It is associated with the U3, U8 and U13 small nuclear RNAs. By homology to other fibrillarins, some or all of the N-terminal domain arginines are modified to asymmetric dimethylarginine (DMA).

Its subcellular location is the nucleus. It is found in the nucleolus. The catalysed reaction is L-glutaminyl-[histone H2A] + S-adenosyl-L-methionine = N(5)-methyl-L-glutaminyl-[histone H2A] + S-adenosyl-L-homocysteine + H(+). S-adenosyl-L-methionine-dependent methyltransferase that has the ability to methylate both RNAs and proteins. Involved in pre-rRNA processing. Utilizes the methyl donor S-adenosyl-L-methionine to catalyze the site-specific 2'-hydroxyl methylation of ribose moieties in pre-ribosomal RNA. Site specificity is provided by a guide RNA that base pairs with the substrate. Methylation occurs at a characteristic distance from the sequence involved in base pairing with the guide RNA. Also acts as a protein methyltransferase by mediating methylation of 'Gln-105' of histone H2A (H2AQ105me), a modification that impairs binding of the FACT complex and is specifically present at 35S ribosomal DNA locus. In Giardia intestinalis (Giardia lamblia), this protein is rRNA 2'-O-methyltransferase fibrillarin.